Here is a 328-residue protein sequence, read N- to C-terminus: CMP-N-acetylneuraminate-beta-galactosamide-alpha-2,3-sialyltransferase 4 (328 aa).

Residues 1–7 lie on the Cytoplasmic side of the membrane; sequence MCPAGWK. Residues 8 to 25 form a helical; Signal-anchor for type II membrane protein membrane-spanning segment; the sequence is LLAMLALVLVVMVWYSIS. At 26–328 the chain is on the lumenal side; that stretch reads REDSFYFPIP…MGAVKNLTSF (303 aa). N-linked (GlcNAc...) asparagine glycans are attached at residues Asn56, Asn126, Asn305, and Asn324. Cysteines 115 and 268 form a disulfide.

Belongs to the glycosyltransferase 29 family. The soluble form derives from the membrane form by proteolytic processing.

Its subcellular location is the golgi apparatus. It localises to the golgi stack membrane. It is found in the secreted. The catalysed reaction is a beta-D-galactosyl-(1-&gt;3)-N-acetyl-beta-D-galactosaminyl derivative + CMP-N-acetyl-beta-neuraminate = an N-acetyl-alpha-neuraminyl-(2-&gt;3)-beta-D-galactosyl-(1-&gt;3)-N-acetyl-beta-D-galactosaminyl derivative + CMP + H(+). The enzyme catalyses a beta-D-galactosyl-(1-&gt;3)-N-acetyl-alpha-D-galactosaminyl derivative + CMP-N-acetyl-beta-neuraminate = an N-acetyl-alpha-neuraminyl-(2-&gt;3)-beta-D-galactosyl-(1-&gt;3)-N-acetyl-alpha-D-galactosaminyl derivative + CMP + H(+). It catalyses the reaction a beta-D-galactosyl-(1-&gt;4)-N-acetyl-beta-D-glucosaminyl derivative + CMP-N-acetyl-beta-neuraminate = an N-acetyl-alpha-neuraminyl-(2-&gt;3)-beta-D-galactosyl-(1-&gt;4)-N-acetyl-beta-D-glucosaminyl derivative + CMP + H(+). It carries out the reaction a ganglioside GM1 (d18:1(4E)) + CMP-N-acetyl-beta-neuraminate = a ganglioside GD1a (d18:1(4E)) + CMP + H(+). The catalysed reaction is a ganglioside GA1 (d18:1(4E)) + CMP-N-acetyl-beta-neuraminate = a ganglioside GM1b (d18:1(4E)) + CMP + H(+). The enzyme catalyses a ganglioside GT1c (d18:1(4E)) + CMP-N-acetyl-beta-neuraminate = a ganglioside GQ1c (d18:1(4E)) + CMP + H(+). It catalyses the reaction a neolactoside nLc4Cer + CMP-N-acetyl-beta-neuraminate = a neolactoside IV(3)-alpha-NeuAc-nLc4Cer + CMP + H(+). It carries out the reaction a neolactoside nLc4Cer(d18:1(4E)) + CMP-N-acetyl-beta-neuraminate = a neolactoside IV(3)-alpha-NeuAc-nLc4Cer(d18:1(4E)) + CMP + H(+). It functions in the pathway protein modification; protein glycosylation. It participates in glycolipid biosynthesis. Functionally, a beta-galactoside alpha2-3 sialyltransferase involved in terminal sialylation of glycoproteins and glycolipids. Catalyzes the transfer of sialic acid (N-acetyl-neuraminic acid; Neu5Ac) from the nucleotide sugar donor CMP-Neu5Ac onto acceptor Galbeta-(1-&gt;3)-GalNAc- and Galbeta-(1-&gt;4)-GlcNAc-terminated glycoconjugates through an alpha2-3 linkage. Plays a major role in hemostasis. Responsible for sialylation of plasma VWF/von Willebrand factor, preventing its recognition by asialoglycoprotein receptors (ASGPR) and subsequent clearance. Regulates ASGPR-mediated clearance of platelets. Participates in the biosynthesis of the sialyl Lewis X epitopes, both on O- and N-glycans, which are recognized by SELE/E-selectin, SELP/P-selectin and SELL/L-selectin. Essential for selectin-mediated rolling and adhesion of leukocytes during extravasation. Contributes to adhesion and transendothelial migration of neutrophils likely through terminal sialylation of CXCR2. In glycosphingolipid biosynthesis, sialylates GM1 and GA1 gangliosides to form GD1a and GM1b, respectively. Metabolizes brain c-series ganglioside GT1c forming GQ1c. Synthesizes ganglioside LM1 (IV3Neu5Ac-nLc4Cer), a major structural component of peripheral nerve myelin. The sequence is that of CMP-N-acetylneuraminate-beta-galactosamide-alpha-2,3-sialyltransferase 4 (ST3GAL4) from Pan troglodytes (Chimpanzee).